A 352-amino-acid polypeptide reads, in one-letter code: Tubby-like F-box protein 10 (352 aa).

Residues 1-11 (MAAVREPREEA) show a composition bias toward basic and acidic residues. The interval 1 to 23 (MAAVREPREEAAVGEGEGEEEGR) is disordered. The F-box domain occupies 22–78 (GRWGGLLPELVEEVVRRVEASGGERWPARKDLVSCACVCRRWREAAAAVVRPLPESG).

This sequence belongs to the TUB family. As to expression, ubiquitous.

This chain is Tubby-like F-box protein 10 (TULP10), found in Oryza sativa subsp. japonica (Rice).